A 264-amino-acid chain; its full sequence is Teichoic acids export ATP-binding protein TagH (264 aa).

Positions 5 to 243 (VNIKNVTKEY…YEAFLNDFKK (239 aa)) constitute an ABC transporter domain. Residue 57-64 (GINGSGKS) coordinates ATP.

Belongs to the ABC transporter superfamily. Teichoic acids exporter (TC 3.A.1.104.1) family. As to quaternary structure, the complex is composed of two ATP-binding proteins (TagH) and two transmembrane proteins (TagG).

It is found in the cell membrane. The enzyme catalyses ATP + H2O + teichoic acidSide 1 = ADP + phosphate + teichoic acidSide 2.. Functionally, part of the ABC transporter complex TagGH involved in teichoic acids export. Responsible for energy coupling to the transport system. The protein is Teichoic acids export ATP-binding protein TagH of Staphylococcus aureus (strain Mu50 / ATCC 700699).